Consider the following 143-residue polypeptide: uncharacterized protein (143 aa).

Positions 24 to 78 (IRQRRRWQNMSQAALGEAIGVTFQQVQKYEKGSNRVGAGRLQQISDALEVHPSYF) constitute an HTH cro/C1-type domain. A DNA-binding region (H-T-H motif) is located at residues 35–54 (QAALGEAIGVTFQQVQKYEK).

This is an uncharacterized protein from Sinorhizobium fredii (strain NBRC 101917 / NGR234).